A 118-amino-acid polypeptide reads, in one-letter code: Large ribosomal subunit protein bL20 (118 aa).

It belongs to the bacterial ribosomal protein bL20 family.

Binds directly to 23S ribosomal RNA and is necessary for the in vitro assembly process of the 50S ribosomal subunit. It is not involved in the protein synthesizing functions of that subunit. In Syntrophotalea carbinolica (strain DSM 2380 / NBRC 103641 / GraBd1) (Pelobacter carbinolicus), this protein is Large ribosomal subunit protein bL20.